Reading from the N-terminus, the 152-residue chain is MFRGASAINLDTKGRIAIPKRYREPLRAEYNGQLVITVDFQSSCLLLYPLDEWSKIEAKLLLLSDTRASERAMKRLLLGYAHECELDGNGRLLLPPPLRQYANLEKHAMLVGQLNKFELWDEAAWQQQIEQSRETIRSEEFASNERLADFSL.

SpoVT-AbrB domains are found at residues 5 to 52 (ASAI…PLDE) and 81 to 124 (AHEC…DEAA).

Belongs to the MraZ family. As to quaternary structure, forms oligomers.

The protein resides in the cytoplasm. It is found in the nucleoid. The chain is Transcriptional regulator MraZ from Shewanella violacea (strain JCM 10179 / CIP 106290 / LMG 19151 / DSS12).